We begin with the raw amino-acid sequence, 419 residues long: Acyl-coenzyme A thioesterase 6 (419 aa).

Active-site charge relay system residues include Ser232, Asp324, and His358. Residues 417-419 carry the Peroxisome targeting signal motif; the sequence is SKL.

The protein belongs to the C/M/P thioester hydrolase family. Highly expressed in white adipose tissue. Detected at lower levels in kidney, liver, brown adipose tissue and brain.

It localises to the peroxisome. The enzyme catalyses pristanoyl-CoA + H2O = 2,6,10,14-tetramethylpentadecanoate + CoA + H(+). It catalyses the reaction phytanoyl-CoA + H2O = 3,7,11,15-tetramethylhexadecanoate + CoA + H(+). It functions in the pathway lipid metabolism; fatty acid metabolism. Its function is as follows. Catalyzes the hydrolysis of acyl-CoAs into free fatty acids and coenzyme A (CoASH), regulating their respective intracellular levels. Catalyzes the hydrolysis of phytanoyl-CoA and pristanoyl-CoA, two methyl-branched fatty acids derived from phytol, that enter the body via the diet. The sequence is that of Acyl-coenzyme A thioesterase 6 from Mus musculus (Mouse).